A 483-amino-acid polypeptide reads, in one-letter code: Jacalin-related lectin 13 (483 aa).

The segment at 1–20 (MTQKLESVGSERKSSEYMWD) is disordered. Jacalin-type lectin domains follow at residues 2-147 (TQKL…YVTW), 150-295 (PARM…YFTT), and 307-461 (FREK…YFFP).

Belongs to the jacalin lectin family.

In Arabidopsis thaliana (Mouse-ear cress), this protein is Jacalin-related lectin 13 (JAL13).